The sequence spans 547 residues: Glucose-6-phosphate isomerase (547 aa).

The active-site Proton donor is the Glu-353. Active-site residues include His-384 and Lys-512.

Belongs to the GPI family.

It is found in the cytoplasm. It carries out the reaction alpha-D-glucose 6-phosphate = beta-D-fructose 6-phosphate. It functions in the pathway carbohydrate biosynthesis; gluconeogenesis. Its pathway is carbohydrate degradation; glycolysis; D-glyceraldehyde 3-phosphate and glycerone phosphate from D-glucose: step 2/4. Catalyzes the reversible isomerization of glucose-6-phosphate to fructose-6-phosphate. This Campylobacter jejuni subsp. doylei (strain ATCC BAA-1458 / RM4099 / 269.97) protein is Glucose-6-phosphate isomerase.